The following is a 519-amino-acid chain: Circadian clock oscillator protein KaiC (519 aa).

The region spanning 1–247 is the KaiC 1 domain; the sequence is MTSAEMTSPN…TITDHGINIF (247 aa). Positions 49, 50, 51, 52, 53, and 54 each coordinate ATP. Residue threonine 53 coordinates Mg(2+). Glutamate 77 (proton acceptor in CI (KaiC 1)) is an active-site residue. Residue serine 89 participates in ATP binding. Residues 115 to 122 are B-loop, required to bind KaiB and SasA; that stretch reads QEVVGGFD. Positions 224, 225, 226, 228, 230, 240, and 241 each coordinate ATP. The interval 248-260 is linker; that stretch reads PLGAMRLTQRSSN. Residues 261–519 form the KaiC 2 domain; the sequence is VRVSSGVVRL…RGVQEKGPES (259 aa). ATP contacts are provided by threonine 290, glycine 291, threonine 292, glycine 293, lysine 294, threonine 295, and leucine 296. A Mg(2+)-binding site is contributed by threonine 295. Position 318 (glutamate 318) interacts with Mg(2+). Glutamate 318 serves as the catalytic Proton acceptor in CII (KaiC 2). Tryptophan 331 provides a ligand contact to ATP. Serine 431 is modified (phosphoserine; by autocatalysis). Threonine 432 is subject to Phosphothreonine; by autocatalysis. ATP contacts are provided by arginine 451, lysine 457, methionine 458, arginine 459, serine 461, histidine 463, and lysine 465. Positions 488-497 are A-loop, interacts with KaiA; it reads RIISGSPTRI.

This sequence belongs to the KaiC family. As to quaternary structure, homohexamer resembling 2 stacked donuts with a central pore nearly blocked on one side; hexamerization is dependent on ATP-binding. Binds 12 ATP; 6 between each subunit in both layers. KaiB only binds to phospho-Ser-431 KaiC (not doubly phosphorylated KaiC). Complex formation between KaiB and KaiC is regulated by the phosphorylation state of KaiC and by an ATP hydrolysis-driven conformation change in the CI ring of KaiC; complex formation is slow. Slow complex formation is crucial for the timing of the circadian period. KaiB switches to a thioredoxin-like form called KaiB(fs) when bound to KaiC. The KaiABC complex composition changes during the circadian cycle to control KaiC phosphorylation. Complexes KaiC(6), KaiA(2-4):KaiC(6), KaiB(6):KaiC(6) and KaiC(6):KaiB(6):KaiA(12) are among the most important forms, many form cooperatively. Interacts directly with KaiB and SasA. The CI domain binds to KaiB and SasA; as they have a similar fold they compete for the same site on CI. CikA interacts with this protein in the clock complex. Binds to the C-terminus of KaiA via a coiled-coil structure. Forms KaiC(6):KaiB(1) and KaiC(6):KaiB(6) complexes. Requires Mg(2+) as cofactor. Has a 4 step phosphorylation cycle; the autokinase acts first on Thr-432, then Ser-431. When Ser-431 is modified KaiC switches to an autophosphatase mode, acting first on phospho-Thr-432 then phospho-Ser-431. Phosphorylated and dephosphorylated on serine/threonine residues by autocatalysis. Unphosphorylated, mono- and di-phosphorylated forms exist. The phosphorylated form correlates with clock speed. The presence of KaiA increases phosphorylation and stabilizes these forms. In terms of processing, phosphorylated on serine and threonine residues by autocatalysis. Has a 4 step phosphorylation cycle; the autokinase acts first on Thr-432, then Ser-431. When Ser-431 is modified KaiC switches to an autophosphatase mode, acting first on phospho-Thr-432 then phospho-Ser-431.

The enzyme catalyses L-seryl-[protein] + ATP = O-phospho-L-seryl-[protein] + ADP + H(+). It carries out the reaction L-threonyl-[protein] + ATP = O-phospho-L-threonyl-[protein] + ADP + H(+). The catalysed reaction is ATP + H2O = ADP + phosphate + H(+). With respect to regulation, interaction with KaiA stimulates autophosphorylation, KaiC interaction with KaiB sequesters KaiA, preventing it stimulating the KaiC kinase, leading to autodephosphorylation. A KaiA dimer is sufficient to enhance KaiC phosphorylation. Interaction of KaiA with the A-loop stimulates autokinase activity. The KaiABC oscillator complex constitutes the main circadian regulator in cyanobacteria. Complex composition changes during the circadian cycle to control KaiC phosphorylation; KaiA stimulates KaiC autophosphorylation, while KaiB sequesters KaiA, leading to KaiC autodephosphorylation. The Kai complex controls chromosome condensation, leading to a transcription accessible chromosome during the first half of the circadian cycle and a compact, less transcription-accessible chromosome during the latter half. Clock output pathways impact the RpaA transcriptional regulator. Circadian oscillations can be generated in vitro by incubating KaiA, KaiB and KaiC with 1 mM ATP. The cycle is self-sustainable for at least 3 cycles and resistant to temperature changes. Mutations in KaiC alone prolong or reduce the circadian rhythm. A very robust clock is reconstituted with KaiA, KaiB, KaiC, SasA, CikA and RpaA; output is measured by transcription from an appropriate reporter. In terms of biological role, the level of KaiC phosphorylation and KaiC ATPase activity represent the key features of the biochemical oscillator. KaiA homodimer binding to the KaiC CII domain stimulates KaiC's ATPase activity and forms KaiA(2-4):KaiC(6) complexes, which stimulate KaiC autophosphorylation first on Thr-432 then Ser-431. Phospho-Ser-431-KaiC accumulation triggers binding of KaiB to CI to form the KaiB(6):KaiC(6) complex, leading to changes in the output regulators CikA and SasA. KaiB(6):KaiC(6) formation exposes a site for KaiA binding that sequesters KaiA from the CII domain, making the KaiC(6):KaiB(6):KaiA(12) complex that results in KaiC autodephosphorylation. Complete dephosphorylation of KaiC leads to dissociation of KaiA(2):KaiB(1), completing 1 cycle of the Kai oscillator. Functionally, has a weak, temperature-independent ATPase activity (about 15 molecules of ATP per day); the addition of KaiA and KaiB increases activity slightly and makes the activity oscillate with a circadian period in vitro for over 60 hours. ATPase activity defines the circadian period. The phosphorylation state of KaiC modulates its ATPase activity and effects KaiB binding. Its function is as follows. There are several clock output pathways; SasA/RpaA, CikA/RpaA and LabA. KaiC enhances the autophosphorylation activity of SasA, which then transfers its phosphate group to RpaA to activate it. Phosphotransfer is maximal when KaiC phosphorylation is active during the circadian cycle. KaiB and KaiC together enhance the phosphatase activity of CikA on phospho-RpaA. KaiC is important for metabolic partitioning during the dark to light shift, modulating the balance between the Calvin cycle and oxidative pentose phosphate pathway under natural growth conditions. This chain is Circadian clock oscillator protein KaiC, found in Synechococcus elongatus (strain ATCC 33912 / PCC 7942 / FACHB-805) (Anacystis nidulans R2).